The chain runs to 309 residues: MLENIKQTITRWDERNPWTNVYGLARSIIALSSLLTLLINHPSLIMKPASGISSYPACKMNLSLFCLGENNYMMLNLFRWVCIAILVLVVIGWRPRITGVLHWYVSYSLQSSLIVIDGGEQAAAVMTFLLLPITLTDPRKWHWSTRPIEGKRTLGKITAFISYFVIRIQVAVLYFHSTVAKLSQQEWVDGTAVYYFAQEKTIGFNGFFQALTKPIVTSPFVVIPTWGTLLVQIVIFAALFAPKKHWRLILIIAVFMHEIFAVMLGLISFSIIMAGILILYLTPIDSTIQFTYIRRLLWNKKHKKGEVSV.

Helical transmembrane passes span 28–48 (IIAL…IMKP), 73–93 (MMLN…VIGW), 113–133 (LIVI…LLPI), 157–177 (ITAF…YFHS), 220–240 (FVVI…AALF), and 259–279 (IFAV…ILIL).

Its subcellular location is the cell membrane. This is an uncharacterized protein from Bacillus subtilis (strain 168).